The following is an 86-amino-acid chain: Cell division topological specificity factor (86 aa).

This sequence belongs to the MinE family.

Prevents the cell division inhibition by proteins MinC and MinD at internal division sites while permitting inhibition at polar sites. This ensures cell division at the proper site by restricting the formation of a division septum at the midpoint of the long axis of the cell. In Photobacterium profundum (strain SS9), this protein is Cell division topological specificity factor.